Here is a 46-residue protein sequence, read N- to C-terminus: Photosystem II reaction center protein K (46 aa).

Residues 1–9 (MTTLALVLA) constitute a propeptide that is removed on maturation. Residues 18–38 (FAPIVDVLPVIPVFFILLAFV) traverse the membrane as a helical segment.

It belongs to the PsbK family. As to quaternary structure, PSII is composed of 1 copy each of membrane proteins PsbA, PsbB, PsbC, PsbD, PsbE, PsbF, PsbH, PsbI, PsbJ, PsbK, PsbL, PsbM, PsbT, PsbX, PsbY, PsbZ, Psb30/Ycf12, at least 3 peripheral proteins of the oxygen-evolving complex and a large number of cofactors. It forms dimeric complexes. This protein is tightly associated with CP43 (psbC), one of the core proteins.

Its subcellular location is the plastid. The protein localises to the chloroplast thylakoid membrane. One of the components of the core complex of photosystem II (PSII). PSII is a light-driven water:plastoquinone oxidoreductase that uses light energy to abstract electrons from H(2)O, generating O(2) and a proton gradient subsequently used for ATP formation. It consists of a core antenna complex that captures photons, and an electron transfer chain that converts photonic excitation into a charge separation. Required for assembly and/or stability of PSII. The polypeptide is Photosystem II reaction center protein K (Chlamydomonas reinhardtii (Chlamydomonas smithii)).